The primary structure comprises 30 residues: Cyclotide hyen-K (30 aa).

The cyclopeptide (Gly-Asn) cross-link spans 1 to 30 (GIPCGESCIFIPCITTVVGCSCSNKVCYDN). 3 cysteine pairs are disulfide-bonded: cysteine 4/cysteine 20, cysteine 8/cysteine 22, and cysteine 13/cysteine 27.

In terms of processing, this is a cyclic peptide. In terms of tissue distribution, detected in seeds (at protein level).

Probably participates in a plant defense mechanism. The protein is Cyclotide hyen-K of Pigea enneasperma (Spade flower).